Consider the following 339-residue polypeptide: Deubiquitinase and deneddylase Dub2 (339 aa).

The helical transmembrane segment at 36-56 (IIIALFLIVISCGLILCAYTF) threads the bilayer. Residues His203, Asp220, and Cys282 contribute to the active site.

This sequence belongs to the peptidase C48 family.

The protein resides in the secreted. It is found in the host cell. Its subcellular location is the membrane. Effector proteins function to alter host cell physiology and promote bacterial survival in host tissues. This protease possesses deubiquitinating and deneddylating activities. This is Deubiquitinase and deneddylase Dub2 (cdu2) from Chlamydia trachomatis serovar L2 (strain ATCC VR-902B / DSM 19102 / 434/Bu).